Consider the following 273-residue polypeptide: Undecaprenyl-diphosphatase (273 aa).

Transmembrane regions (helical) follow at residues 13–35, 45–62, 82–102, 108–128, 186–206, 219–239, and 250–270; these read GLVE…VFGN, VFEI…VFEY, FVLN…LFDK, LFNP…ILWV, TEFS…YDVL, LILI…KALL, and FAYY…SGWI.

It belongs to the UppP family.

It is found in the cell inner membrane. The enzyme catalyses di-trans,octa-cis-undecaprenyl diphosphate + H2O = di-trans,octa-cis-undecaprenyl phosphate + phosphate + H(+). Functionally, catalyzes the dephosphorylation of undecaprenyl diphosphate (UPP). Confers resistance to bacitracin. The polypeptide is Undecaprenyl-diphosphatase (Neisseria gonorrhoeae (strain NCCP11945)).